A 323-amino-acid polypeptide reads, in one-letter code: Lipoyl synthase (323 aa).

[4Fe-4S] cluster contacts are provided by Cys61, Cys66, Cys72, Cys87, Cys91, Cys94, and Ser300. Positions 73-289 (WDKKHATFMI…ETVAYTKGFL (217 aa)) constitute a Radical SAM core domain.

The protein belongs to the radical SAM superfamily. Lipoyl synthase family. [4Fe-4S] cluster is required as a cofactor.

It is found in the cytoplasm. It catalyses the reaction [[Fe-S] cluster scaffold protein carrying a second [4Fe-4S](2+) cluster] + N(6)-octanoyl-L-lysyl-[protein] + 2 oxidized [2Fe-2S]-[ferredoxin] + 2 S-adenosyl-L-methionine + 4 H(+) = [[Fe-S] cluster scaffold protein] + N(6)-[(R)-dihydrolipoyl]-L-lysyl-[protein] + 4 Fe(3+) + 2 hydrogen sulfide + 2 5'-deoxyadenosine + 2 L-methionine + 2 reduced [2Fe-2S]-[ferredoxin]. It functions in the pathway protein modification; protein lipoylation via endogenous pathway; protein N(6)-(lipoyl)lysine from octanoyl-[acyl-carrier-protein]: step 2/2. Catalyzes the radical-mediated insertion of two sulfur atoms into the C-6 and C-8 positions of the octanoyl moiety bound to the lipoyl domains of lipoate-dependent enzymes, thereby converting the octanoylated domains into lipoylated derivatives. The protein is Lipoyl synthase of Sinorhizobium medicae (strain WSM419) (Ensifer medicae).